Consider the following 185-residue polypeptide: Hypoxanthine/guanine phosphoribosyltransferase (185 aa).

Belongs to the purine/pyrimidine phosphoribosyltransferase family. Archaeal HPRT subfamily. Homodimer.

The protein resides in the cytoplasm. It catalyses the reaction IMP + diphosphate = hypoxanthine + 5-phospho-alpha-D-ribose 1-diphosphate. It carries out the reaction GMP + diphosphate = guanine + 5-phospho-alpha-D-ribose 1-diphosphate. It functions in the pathway purine metabolism; IMP biosynthesis via salvage pathway; IMP from hypoxanthine: step 1/1. Its function is as follows. Catalyzes a salvage reaction resulting in the formation of IMP that is energically less costly than de novo synthesis. The polypeptide is Hypoxanthine/guanine phosphoribosyltransferase (hpt) (Methanococcus maripaludis (strain DSM 14266 / JCM 13030 / NBRC 101832 / S2 / LL)).